The chain runs to 950 residues: MNPVAVTSVAPVDIIHDLRHSEHATEASPITLLHVFSRAVSQYPNHELNFITSSAHDSIHTKTFTEFDQYVRALAQAMLAWGKPAGSVIVVYLTEHEDNMAAIWASLFAGYVPCLQPALSAQQAHKEGHVAHIKNLFSSATWLTNESGAEQVQSIPGLDIHLLSELQASAETVSVDFQTHQPHLDDEAILFLTSGSTGFSKAVVHTHRTILAGCNAKGQSYGLTSESKIMNWVGFDHVVGSLGMHITPLLCGASQLHVHASAILSDSLRFLHLIEEKSIQLVFAPNFLLAKLTRDLEKRSDLFGKFDLSSIKRINSGGEAVVSSTAQAFARTLKNLAKDGDASFVFSTGFGMTETGAGCIYDTIDVLGTSPPHEFLEIGTPVAGCEMRIVNPEDGVTPRPDGESGELQVRGPMVFVRYYNNPETTSSSFVEGGWYRTGDVGIFEKGKMRLSGRIKDTVVVHGVSYGIPELETYLQTVEGVAHSFLVAAPYRAPGQETEGFVVFYSPTFDLDSEDAPAKLYATHRALRDVSVKLITLPPQQIIPLTLNQMEKSTLGKLSRARLLNLFKQGELAKYIIRAEELLGIARGANFVAPSTETEKTLAGIYAGIFHLSVSDISTSENFFEFGGTSIDAIRLKREAESAFDLSEIPTIQIFKHPEIITLAKYVDSLVSKDASEEEYDPIVPLQLTGKKTPIFMVHPGIGEVLIFVNLAKYFQNERPFYALRARGFEAGQPCFTSLDEMVSCYAAAIKRTQPHGPYAIAGYSYGGVIAFEVAKRLEVMGSEVQFTGIIDMIPHHMPRSDWTGGLLILSYFLGLVSKQDTNDLAPSMRPLARTEQFEMVWKLSPPERLVELQLTLEKLEHWVNVADSVREFAKKYEACSSVSVLDVFYAIPVRGTKEDWFNNHIKRWASYSRAEPSYVDVPGHHYTLMDFDHVPRFQKIFRARLEARGL.

Positions 37-460 (SRAVSQYPNH…SGRIKDTVVV (424 aa)) are adenylation (A) domain. Residues 592 to 670 (APSTETEKTL…TLAKYVDSLV (79 aa)) enclose the Carrier domain. Residues 597-667 (TEKTLAGIYA…EIITLAKYVD (71 aa)) form a thiolation and peptide carrier (T) domain region. Ser629 bears the O-(pantetheine 4'-phosphoryl)serine mark. Residues 693 to 797 (PIFMVHPGIG…GIIDMIPHHM (105 aa)) are thioesterase (TE) domain.

Belongs to the ATP-dependent AMP-binding enzyme family.

Its function is as follows. Inactive atromentin synthetase homolog. Does not accept 4-hydroxyphenylpyruvate (4-HPP) as substrate. In Paxillus involutus (Naked brimcap), this protein is Inactive atromentin synthetase invA4 (invA4).